The following is a 389-amino-acid chain: Lipid-A-disaccharide synthase (389 aa).

Belongs to the LpxB family.

The enzyme catalyses a lipid X + a UDP-2-N,3-O-bis[(3R)-3-hydroxyacyl]-alpha-D-glucosamine = a lipid A disaccharide + UDP + H(+). Its pathway is bacterial outer membrane biogenesis; LPS lipid A biosynthesis. Functionally, condensation of UDP-2,3-diacylglucosamine and 2,3-diacylglucosamine-1-phosphate to form lipid A disaccharide, a precursor of lipid A, a phosphorylated glycolipid that anchors the lipopolysaccharide to the outer membrane of the cell. The chain is Lipid-A-disaccharide synthase from Burkholderia cenocepacia (strain HI2424).